A 405-amino-acid polypeptide reads, in one-letter code: MLISHPRIMIRHAPWVTSIETFCCSLATLFPKVFYTSVLTWSVYALIVHGCYDTLMTTQETSIFAIAIGLIGLTLYILCLYTYFKVLRAGPGSPSDFEELRIRNILSLSKPKYNSANPYDTNDNMATSASLLANAEGVDEIESIESEQPPSEYMTLHMLKSNNSSYRYCTKCSVWKPDRCHHCSTCNRCVLRMDHHCPWFAMCVGFYNHKFFAQFLMYLTAYSGFDFVVSLSILWKFFADEKYNDHYLSLNLVFLFVLSLAFFITVGGFSAFSLYLVFRNKTTIEFQENRWNFKNDKNGKSFQYEFDGSGKKKKLGNIFDLGCGRNWRSIMGPSWYYWLLPVTVTNKSIDARLENGINFEIDQDVYDRWCYNAQLQDQLNQQLADYKNRIRMEREANQTTDTNPF.

The Cytoplasmic portion of the chain corresponds to 1–27 (MLISHPRIMIRHAPWVTSIETFCCSLA). A helical transmembrane segment spans residues 28-48 (TLFPKVFYTSVLTWSVYALIV). Residues 49 to 62 (HGCYDTLMTTQETS) lie on the Lumenal side of the membrane. Residues 63-83 (IFAIAIGLIGLTLYILCLYTY) traverse the membrane as a helical segment. The Cytoplasmic portion of the chain corresponds to 84 to 214 (FKVLRAGPGS…GFYNHKFFAQ (131 aa)). The 51-residue stretch at 167-217 (RYCTKCSVWKPDRCHHCSTCNRCVLRMDHHCPWFAMCVGFYNHKFFAQFLM) folds into the DHHC domain. The chain crosses the membrane as a helical span at residues 215-235 (FLMYLTAYSGFDFVVSLSILW). Residues 236–251 (KFFADEKYNDHYLSLN) lie on the Lumenal side of the membrane. Residues 252–272 (LVFLFVLSLAFFITVGGFSAF) form a helical membrane-spanning segment. The Cytoplasmic segment spans residues 273 to 405 (SLYLVFRNKT…ANQTTDTNPF (133 aa)).

Belongs to the DHHC palmitoyltransferase family. PFA3 subfamily. Post-translationally, autopalmitoylated.

The protein resides in the vacuole membrane. The enzyme catalyses L-cysteinyl-[protein] + hexadecanoyl-CoA = S-hexadecanoyl-L-cysteinyl-[protein] + CoA. Functionally, palmitoyltransferase specific for VAC8. Palmitoylates VAC8 at one or more of its N-terminal cysteine residues, which is required for its proper membrane localization. The protein is Palmitoyltransferase PFA3 (PFA3) of Debaryomyces hansenii (strain ATCC 36239 / CBS 767 / BCRC 21394 / JCM 1990 / NBRC 0083 / IGC 2968) (Yeast).